We begin with the raw amino-acid sequence, 201 residues long: Dephospho-CoA kinase (201 aa).

The region spanning 4–201 (TIGLTGGIAS…ILKQWDALEK (198 aa)) is the DPCK domain. 12–17 (ASGKST) provides a ligand contact to ATP.

Belongs to the CoaE family.

It is found in the cytoplasm. The enzyme catalyses 3'-dephospho-CoA + ATP = ADP + CoA + H(+). Its pathway is cofactor biosynthesis; coenzyme A biosynthesis; CoA from (R)-pantothenate: step 5/5. Its function is as follows. Catalyzes the phosphorylation of the 3'-hydroxyl group of dephosphocoenzyme A to form coenzyme A. This Geobacillus kaustophilus (strain HTA426) protein is Dephospho-CoA kinase.